The chain runs to 147 residues: UPF0251 protein NT01CX_1491 (147 aa).

The protein belongs to the UPF0251 family.

This chain is UPF0251 protein NT01CX_1491, found in Clostridium novyi (strain NT).